Here is a 353-residue protein sequence, read N- to C-terminus: Cyclin-dependent kinase-like 1 (353 aa).

In terms of domain architecture, Protein kinase spans 4 to 286; that stretch reads YDRLSKLGEG…CSELMLHGIF (283 aa). Residues 10–18 and Lys33 contribute to the ATP site; that span reads LGEGSYGVV. Asp126 (proton acceptor) is an active-site residue. Residues 331–353 form a disordered region; sequence GGNHGNNNNNGNGINRNFLPTIS. Over residues 335 to 347 the composition is skewed to low complexity; that stretch reads GNNNNNGNGINRN.

Belongs to the protein kinase superfamily. Ser/Thr protein kinase family. As to expression, specifically expressed in head and tail ciliated sensory neurons.

Its subcellular location is the cell projection. The protein localises to the cilium. The catalysed reaction is L-seryl-[protein] + ATP = O-phospho-L-seryl-[protein] + ADP + H(+). It carries out the reaction L-threonyl-[protein] + ATP = O-phospho-L-threonyl-[protein] + ADP + H(+). Its function is as follows. Modulates cilium assembly. The chain is Cyclin-dependent kinase-like 1 from Caenorhabditis elegans.